The primary structure comprises 243 residues: tRNA (guanine-N(1)-)-methyltransferase (243 aa).

S-adenosyl-L-methionine contacts are provided by residues Gly-113 and 133 to 138 (IGDFVL).

Belongs to the RNA methyltransferase TrmD family. Homodimer.

It localises to the cytoplasm. The enzyme catalyses guanosine(37) in tRNA + S-adenosyl-L-methionine = N(1)-methylguanosine(37) in tRNA + S-adenosyl-L-homocysteine + H(+). Its function is as follows. Specifically methylates guanosine-37 in various tRNAs. The polypeptide is tRNA (guanine-N(1)-)-methyltransferase (Bacillus velezensis (strain DSM 23117 / BGSC 10A6 / LMG 26770 / FZB42) (Bacillus amyloliquefaciens subsp. plantarum)).